The following is a 587-amino-acid chain: V-type proton ATPase catalytic subunit A (587 aa).

243-250 serves as a coordination point for ATP; the sequence is GAFGCGKT.

It belongs to the ATPase alpha/beta chains family. As to quaternary structure, V-ATPase is a heteromultimeric enzyme composed of a peripheral catalytic V1 complex (main components: subunits A, B, C, D, E, and F) attached to an integral membrane V0 proton pore complex (main component: the proteolipid protein).

The enzyme catalyses ATP + H2O + 4 H(+)(in) = ADP + phosphate + 5 H(+)(out). Catalytic subunit of the peripheral V1 complex of vacuolar ATPase. V-ATPase vacuolar ATPase is responsible for acidifying a variety of intracellular compartments in eukaryotic cells. The polypeptide is V-type proton ATPase catalytic subunit A (Cyanidium caldarium (Red alga)).